Reading from the N-terminus, the 678-residue chain is Transcriptional regulator CRZ1 (678 aa).

Positions 1–21 (MSFSNGNMASYMTSSNGEEQS) are enriched in polar residues. Disordered stretches follow at residues 1-50 (MSFS…SHTF) and 159-195 (TPAD…NYSD). Residues 34–47 (YRRNNFRNSSNSGS) show a composition bias toward low complexity. The segment covering 166 to 195 (RPSLTNQFLSPRSNYDGTTRSSGIDSNYSD) has biased composition (polar residues). T170 carries the phosphothreonine modification. Residues S175, S245, and S385 each carry the phosphoserine modification. Residues 401–486 (KLKKSRRRSS…SNFNEDNNNN (86 aa)) are disordered. A compositionally biased stretch (low complexity) spans 410–428 (SQTSNNSFTSRRSSRSRSI). Composition is skewed to basic and acidic residues over residues 429–446 (SPDE…KLLE) and 457–467 (DNNRERYDNDS). The span at 472 to 486 (NTINSSNFNEDNNNN) shows a compositional bias: low complexity. C2H2-type zinc fingers lie at residues 569-591 (FACD…LRTH) and 597-619 (FICS…EDLH).

In terms of processing, phosphorylated. Dephosphorylated by calcineurin which leads to rapid translocation from the cytoplasm to the nucleus. Phosphorylated by the cyclin-CDK PHO80-PHO85.

It is found in the nucleus. Its subcellular location is the cytoplasm. Its function is as follows. Involved in the regulation of calcium ion homeostasis. Binds to the calcineurin-dependent response element. Transcriptionally regulates PMC1, PMR1, PMR2A and FKS2. This Saccharomyces cerevisiae (strain ATCC 204508 / S288c) (Baker's yeast) protein is Transcriptional regulator CRZ1 (CRZ1).